The primary structure comprises 757 residues: Polyribonucleotide nucleotidyltransferase (757 aa).

The Mg(2+) site is built by Asp482 and Asp488. The 60-residue stretch at 549-608 (PRMLSFYIDKDKISAAIGSKGKNIRSVCERSNAKIEIGDDGKVSVFATSGTEAEIAKSMM) folds into the KH domain. The S1 motif domain maps to 618–686 (GSIVDVKVVR…KGGCPKLSRR (69 aa)). The interval 698–757 (GELYNEERKDGPNDRDNYYNNSFSRKPGGSHHKRPPRPHSGFSNRNRPKFGNNDSSSGFY) is disordered. The span at 702–714 (NEERKDGPNDRDN) shows a compositional bias: basic and acidic residues. Over residues 725–734 (GGSHHKRPPR) the composition is skewed to basic residues.

This sequence belongs to the polyribonucleotide nucleotidyltransferase family. Requires Mg(2+) as cofactor.

It is found in the cytoplasm. It carries out the reaction RNA(n+1) + phosphate = RNA(n) + a ribonucleoside 5'-diphosphate. Its function is as follows. Involved in mRNA degradation. Catalyzes the phosphorolysis of single-stranded polyribonucleotides processively in the 3'- to 5'-direction. This is Polyribonucleotide nucleotidyltransferase from Wolbachia pipientis wMel.